We begin with the raw amino-acid sequence, 258 residues long: 14-3-3-like protein F (258 aa).

It belongs to the 14-3-3 family.

This Nicotiana tabacum (Common tobacco) protein is 14-3-3-like protein F.